The primary structure comprises 292 residues: Hydroxysqualene synthase (292 aa).

Belongs to the phytoene/squalene synthase family. HpnC subfamily.

It carries out the reaction presqualene diphosphate + H2O = hydroxysqualene + diphosphate. It participates in secondary metabolite biosynthesis; hopanoid biosynthesis. In terms of biological role, involved in the biosynthesis of the hopanoid precursor squalene (SQ) from farnesyl diphosphate (FPP). Catalyzes the second step, the conversion of presqualene diphosphate (PSPP) to hydroxysqualene (HSQ). The polypeptide is Hydroxysqualene synthase (Rhodopseudomonas palustris (strain ATCC BAA-98 / CGA009)).